The chain runs to 941 residues: Coiled-coil domain-containing protein 40 (941 aa).

Residues 1 to 14 are compositionally biased toward basic and acidic residues; sequence MEGRQEDQMNRQEE. The tract at residues 1-31 is disordered; sequence MEGRQEDQMNRQEEVEQSNNYDRSVDHARTG. Coiled-coil stretches lie at residues 130–154, 210–430, 548–572, 609–765, 814–856, and 895–915; these read VQEM…AAAQ, DIKA…QIMN, LEIH…CQQL, IRRE…AKSK, AQLE…EIKE, and HKQE…AQEY.

The protein belongs to the CCDC40 family. In terms of tissue distribution, expressed in tissues that contain motile cilia, including Kupffer's vesicle, the floorplate, the pronephric tubules and the otic vesicle.

The protein localises to the cytoplasm. It localises to the cell projection. Its subcellular location is the cilium. In terms of biological role, required for assembly of dynein regulatory complex (DRC) and inner dynein arm (IDA) complexes, which are responsible for ciliary beat regulation, thereby playing a central role in motility in cilia and flagella. Probably acts together with ccdc39 to form a molecular ruler that determines the 96 nanometer (nm) repeat length and arrangements of components in cilia and flagella. The chain is Coiled-coil domain-containing protein 40 (ccdc40) from Danio rerio (Zebrafish).